The primary structure comprises 350 residues: Biotin synthase (350 aa).

The Radical SAM core domain occupies 41–268 (NEVQISRLLS…LSRVRLSAGR (228 aa)). [4Fe-4S] cluster contacts are provided by Cys56, Cys60, and Cys63. Cys100, Cys131, Cys191, and Arg263 together coordinate [2Fe-2S] cluster.

Belongs to the radical SAM superfamily. Biotin synthase family. In terms of assembly, homodimer. The cofactor is [4Fe-4S] cluster. [2Fe-2S] cluster is required as a cofactor.

The enzyme catalyses (4R,5S)-dethiobiotin + (sulfur carrier)-SH + 2 reduced [2Fe-2S]-[ferredoxin] + 2 S-adenosyl-L-methionine = (sulfur carrier)-H + biotin + 2 5'-deoxyadenosine + 2 L-methionine + 2 oxidized [2Fe-2S]-[ferredoxin]. It functions in the pathway cofactor biosynthesis; biotin biosynthesis; biotin from 7,8-diaminononanoate: step 2/2. In terms of biological role, catalyzes the conversion of dethiobiotin (DTB) to biotin by the insertion of a sulfur atom into dethiobiotin via a radical-based mechanism. This is Biotin synthase from Shewanella oneidensis (strain ATCC 700550 / JCM 31522 / CIP 106686 / LMG 19005 / NCIMB 14063 / MR-1).